The sequence spans 269 residues: Formamidopyrimidine-DNA glycosylase (269 aa).

Pro2 acts as the Schiff-base intermediate with DNA in catalysis. Residue Glu3 is the Proton donor of the active site. Lys57 functions as the Proton donor; for beta-elimination activity in the catalytic mechanism. His90, Arg109, and Lys150 together coordinate DNA. The segment at 235 to 269 adopts an FPG-type zinc-finger fold; the sequence is QVYGRKGEPCRVCGTPIVATKHAQRATFYCRHCQK. The active-site Proton donor; for delta-elimination activity is Arg259.

The protein belongs to the FPG family. As to quaternary structure, monomer. It depends on Zn(2+) as a cofactor.

The enzyme catalyses Hydrolysis of DNA containing ring-opened 7-methylguanine residues, releasing 2,6-diamino-4-hydroxy-5-(N-methyl)formamidopyrimidine.. It carries out the reaction 2'-deoxyribonucleotide-(2'-deoxyribose 5'-phosphate)-2'-deoxyribonucleotide-DNA = a 3'-end 2'-deoxyribonucleotide-(2,3-dehydro-2,3-deoxyribose 5'-phosphate)-DNA + a 5'-end 5'-phospho-2'-deoxyribonucleoside-DNA + H(+). Involved in base excision repair of DNA damaged by oxidation or by mutagenic agents. Acts as a DNA glycosylase that recognizes and removes damaged bases. Has a preference for oxidized purines, such as 7,8-dihydro-8-oxoguanine (8-oxoG). Has AP (apurinic/apyrimidinic) lyase activity and introduces nicks in the DNA strand. Cleaves the DNA backbone by beta-delta elimination to generate a single-strand break at the site of the removed base with both 3'- and 5'-phosphates. The chain is Formamidopyrimidine-DNA glycosylase from Salmonella newport (strain SL254).